Here is a 403-residue protein sequence, read N- to C-terminus: Acetate kinase (403 aa).

Asn7 provides a ligand contact to Mg(2+). ATP is bound at residue Lys14. Residue Arg95 participates in substrate binding. Asp152 serves as the catalytic Proton donor/acceptor. ATP-binding positions include His212–Gly216, Asp286–Arg288, and Gly335–Asn339. Glu389 contributes to the Mg(2+) binding site.

This sequence belongs to the acetokinase family. In terms of assembly, homodimer. Mg(2+) serves as cofactor. Mn(2+) is required as a cofactor.

The protein localises to the cytoplasm. It carries out the reaction acetate + ATP = acetyl phosphate + ADP. It participates in metabolic intermediate biosynthesis; acetyl-CoA biosynthesis; acetyl-CoA from acetate: step 1/2. Its function is as follows. Catalyzes the formation of acetyl phosphate from acetate and ATP. Can also catalyze the reverse reaction. This chain is Acetate kinase, found in Desulfovibrio desulfuricans (strain ATCC 27774 / DSM 6949 / MB).